The chain runs to 712 residues: Follistatin-like domain-containing protein DDB_G0289517 (712 aa).

Positions Met1–Ser21 are cleaved as a signal peptide. An N-linked (GlcNAc...) asparagine glycan is attached at Asn102. The interval Asp181–Cys400 is disordered. Over residues Gln192–Lys203 the composition is skewed to basic and acidic residues. Residues Lys204–Asp214 are compositionally biased toward basic residues. N-linked (GlcNAc...) asparagine glycans are attached at residues Asn217 and Asn234. Residues Asp220 to Ile251 are compositionally biased toward low complexity. Residues Thr254–Asp269 are compositionally biased toward polar residues. Residues Gln270–Gln281 show a composition bias toward low complexity. Polar residues predominate over residues Lys301–Arg321. A compositionally biased stretch (acidic residues) spans Lys330 to Asn339. Residues Asp352–His364 are compositionally biased toward basic and acidic residues. N-linked (GlcNAc...) asparagine glycosylation occurs at Asn369. A compositionally biased stretch (acidic residues) spans Pro374–Glu384. Polar residues predominate over residues Pro386 to Val395. Follistatin-like domains follow at residues Pro399–Lys421 and Thr471–Gln494. Residue Asn407 is glycosylated (N-linked (GlcNAc...) asparagine). N-linked (GlcNAc...) asparagine glycosylation is found at Asn505, Asn524, and Asn566. Residues Ser596–Lys618 enclose the Follistatin-like 3 domain. Asn622 is a glycosylation site (N-linked (GlcNAc...) asparagine). 2 consecutive Follistatin-like domains span residues Ser660–Tyr682 and Glu687–Leu710.

The protein resides in the secreted. This chain is Follistatin-like domain-containing protein DDB_G0289517, found in Dictyostelium discoideum (Social amoeba).